The chain runs to 219 residues: Histone H1.4 (219 aa).

Over residues 1–15 (MSETAPAAPAAPAPA) the composition is skewed to low complexity. A disordered region spans residues 1–41 (MSETAPAAPAAPAPAEKTPVKKKARKSAGAAKRKASGPPVS). The residue at position 2 (serine 2) is an N-acetylserine. Serine 2 is subject to Phosphoserine. The residue at position 17 (lysine 17) is an N6-acetyllysine. Residue threonine 18 is modified to Phosphothreonine. The segment covering 20-35 (VKKKARKSAGAAKRKA) has biased composition (basic residues). Position 26 is an N6-acetyllysine; alternate (lysine 26). The residue at position 26 (lysine 26) is an N6-methyllysine; alternate. Lysine 34 is modified (N6-(beta-hydroxybutyryl)lysine; alternate). Residue lysine 34 is modified to N6-succinyllysine; alternate. Position 36 is a phosphoserine (serine 36). An H15 domain is found at 36-109 (SGPPVSELIT…GASGSFKLNK (74 aa)). Lysine 52 is subject to N6-(beta-hydroxybutyryl)lysine. The residue at position 54 (arginine 54) is a Citrulline. N6-(beta-hydroxybutyryl)lysine is present on residues lysine 64, lysine 85, lysine 90, and lysine 106. The segment at 91–219 (GTLVQTKGTG…KPKKAPAKKK (129 aa)) is disordered. The span at 119 to 140 (KPKKAGAAKPKKPAGAAKKPKK) shows a compositional bias: basic residues. The residue at position 146 (threonine 146) is a Phosphothreonine. Basic residues-rich tracts occupy residues 149–160 (KGAKKTPKKAKK) and 168–185 (KKAK…KKAP). A Phosphoserine modification is found at serine 187. The segment covering 192-219 (KAVKPKAAKPKAAKPKTAKPKKAPAKKK) has biased composition (basic residues).

It belongs to the histone H1/H5 family. H1 histones are progressively phosphorylated during the cell cycle, becoming maximally phosphorylated during late G2 phase and M phase, and being dephosphorylated sharply thereafter. In terms of processing, acetylated at Lys-26. Deacetylated at Lys-26 by SIRT1. Post-translationally, citrullination at Arg-54 (H1R54ci) by PADI4 takes place within the DNA-binding site of H1 and results in its displacement from chromatin and global chromatin decondensation, thereby promoting pluripotency and stem cell maintenance.

The protein localises to the nucleus. The protein resides in the chromosome. In terms of biological role, histone H1 protein binds to linker DNA between nucleosomes forming the macromolecular structure known as the chromatin fiber. Histones H1 are necessary for the condensation of nucleosome chains into higher-order structured fibers. Also acts as a regulator of individual gene transcription through chromatin remodeling, nucleosome spacing and DNA methylation. This is Histone H1.4 from Oryctolagus cuniculus (Rabbit).